The chain runs to 341 residues: Galactofuranose transporter permease protein YtfT (341 aa).

Topologically, residues 1–25 (MMPQSLPDTTTPKRRFRWPTGMPQL) are cytoplasmic. The chain crosses the membrane as a helical span at residues 26–46 (VALLLVLLVDSLVAPHFWQVV). Over 47–65 (LQDGRLFGSPIDILNRAAP) the chain is Periplasmic. Transmembrane regions (helical) follow at residues 66 to 86 (VALL…DLSV) and 87 to 107 (GAVM…GFSL). P108 is a topological domain (periplasmic). Residues 109-129 (IVLLSALGTGILAGLWNGILV) traverse the membrane as a helical segment. Residues 130–136 (AILKIQP) are Cytoplasmic-facing. The helical transmembrane segment at 137-157 (FVATLILMVAGRGVAQLITAG) threads the bilayer. The Periplasmic segment spans residues 158–174 (QIVTFNSPDLSWFGSGS). A helical transmembrane segment spans residues 175 to 195 (LLFLPTPVIIAVLTLILFWLL). Topologically, residues 196–223 (TRKTALGMFIEAVGINIRAAKNAGVNTR) are cytoplasmic. The helical transmembrane segment at 224–244 (IIVMLTYVLSGLCAAIAGIIV) threads the bilayer. Residues 245 to 255 (AADIRGADANN) are Periplasmic-facing. Residues 256-276 (AGLWLELDAILAVVIGGGSLM) traverse the membrane as a helical segment. At 277 to 281 (GGRFN) the chain is on the cytoplasmic side. A run of 2 helical transmembrane segments spans residues 282-302 (LLLS…ILLS) and 303-323 (GFPP…VLIV). Residues 324–341 (QSQRFISLIKGVRSRDKT) lie on the Cytoplasmic side of the membrane.

This sequence belongs to the binding-protein-dependent transport system permease family. AraH/RbsC subfamily. As to quaternary structure, the complex is composed of two ATP-binding proteins (YtfR), two transmembrane proteins (YtfT and YjfF) and a solute-binding protein (YtfQ).

The protein localises to the cell inner membrane. Part of the ABC transporter complex YtfQRT-YjfF involved in galactofuranose transport. Probably responsible for the translocation of the substrate across the membrane. The polypeptide is Galactofuranose transporter permease protein YtfT (ytfT) (Escherichia coli (strain K12)).